Reading from the N-terminus, the 101-residue chain is Citrate lyase acyl carrier protein (101 aa).

S14 carries the post-translational modification O-(phosphoribosyl dephospho-coenzyme A)serine.

It belongs to the CitD family. In terms of assembly, oligomer with a subunit composition of (alpha,beta,gamma)6.

It is found in the cytoplasm. Functionally, covalent carrier of the coenzyme of citrate lyase. This chain is Citrate lyase acyl carrier protein, found in Streptococcus uberis (strain ATCC BAA-854 / 0140J).